Consider the following 32-residue polypeptide: Periplasmic [NiFe] hydrogenase small subunit (32 aa).

2 residues coordinate [4Fe-4S] cluster: C17 and C20.

This sequence belongs to the [NiFe]/[NiFeSe] hydrogenase small subunit family. As to quaternary structure, heterodimer of a large and a small subunit. Requires [3Fe-4S] cluster as cofactor. The cofactor is [4Fe-4S] cluster.

It localises to the periplasm. It catalyses the reaction 2 Fe(III)-[cytochrome c3] + H2 = 2 Fe(II)-[cytochrome c3] + 2 H(+). The protein is Periplasmic [NiFe] hydrogenase small subunit (hydA) of Desulfovibrio multispirans.